A 179-amino-acid chain; its full sequence is Phosphopantetheine adenylyltransferase (179 aa).

A substrate-binding site is contributed by Ser23. ATP-binding positions include 23–24 (SF) and His31. Substrate is bound by residues Lys55, Ala87, and Arg101. ATP-binding positions include 102-104 (GIR), Glu112, and 137-143 (FAHVSSS).

It belongs to the bacterial CoaD family. As to quaternary structure, homohexamer. It depends on Mg(2+) as a cofactor.

Its subcellular location is the cytoplasm. It carries out the reaction (R)-4'-phosphopantetheine + ATP + H(+) = 3'-dephospho-CoA + diphosphate. It functions in the pathway cofactor biosynthesis; coenzyme A biosynthesis; CoA from (R)-pantothenate: step 4/5. In terms of biological role, reversibly transfers an adenylyl group from ATP to 4'-phosphopantetheine, yielding dephospho-CoA (dPCoA) and pyrophosphate. The protein is Phosphopantetheine adenylyltransferase of Rhodopirellula baltica (strain DSM 10527 / NCIMB 13988 / SH1).